A 1222-amino-acid polypeptide reads, in one-letter code: ATP-dependent helicase/nuclease subunit A (1222 aa).

The 457-residue stretch at 39–495 folds into the UvrD-like helicase ATP-binding domain; sequence QKRTAQQIEA…ILLKENFRSQ (457 aa). Position 60-67 (60-67) interacts with ATP; sequence ASAGSGKT. Residues 524 to 810 enclose the UvrD-like helicase C-terminal domain; sequence QLIAGSHAQT…NLMTIHKSKG (287 aa).

Belongs to the helicase family. AddA subfamily. As to quaternary structure, heterodimer of AddA and AddB/RexB. Mg(2+) serves as cofactor.

It carries out the reaction Couples ATP hydrolysis with the unwinding of duplex DNA by translocating in the 3'-5' direction.. The catalysed reaction is ATP + H2O = ADP + phosphate + H(+). The heterodimer acts as both an ATP-dependent DNA helicase and an ATP-dependent, dual-direction single-stranded exonuclease. Recognizes the chi site generating a DNA molecule suitable for the initiation of homologous recombination. The AddA nuclease domain is required for chi fragment generation; this subunit has the helicase and 3' -&gt; 5' nuclease activities. In Streptococcus pyogenes serotype M18 (strain MGAS8232), this protein is ATP-dependent helicase/nuclease subunit A.